Reading from the N-terminus, the 376-residue chain is Erythronate-4-phosphate dehydrogenase (376 aa).

Ser45 and Thr67 together coordinate substrate. Residues Asp147, 209 to 211 (ASR), and Asp235 each bind NAD(+). Arg211 is an active-site residue. Glu240 is a catalytic residue. The active-site Proton donor is His257. Residue Gly260 coordinates NAD(+). Tyr261 is a substrate binding site.

The protein belongs to the D-isomer specific 2-hydroxyacid dehydrogenase family. PdxB subfamily. As to quaternary structure, homodimer.

It is found in the cytoplasm. The catalysed reaction is 4-phospho-D-erythronate + NAD(+) = (R)-3-hydroxy-2-oxo-4-phosphooxybutanoate + NADH + H(+). The protein operates within cofactor biosynthesis; pyridoxine 5'-phosphate biosynthesis; pyridoxine 5'-phosphate from D-erythrose 4-phosphate: step 2/5. In terms of biological role, catalyzes the oxidation of erythronate-4-phosphate to 3-hydroxy-2-oxo-4-phosphonooxybutanoate. The sequence is that of Erythronate-4-phosphate dehydrogenase from Aeromonas hydrophila subsp. hydrophila (strain ATCC 7966 / DSM 30187 / BCRC 13018 / CCUG 14551 / JCM 1027 / KCTC 2358 / NCIMB 9240 / NCTC 8049).